The following is a 469-amino-acid chain: Pup--protein ligase (469 aa).

E9 serves as a coordination point for Mg(2+). R53 is a binding site for ATP. Y55 lines the Mg(2+) pocket. D57 acts as the Proton acceptor in catalysis. E63 is a Mg(2+) binding site. Residues T66 and W430 each coordinate ATP.

It belongs to the Pup ligase/Pup deamidase family. Pup-conjugating enzyme subfamily.

It catalyses the reaction ATP + [prokaryotic ubiquitin-like protein]-L-glutamate + [protein]-L-lysine = ADP + phosphate + N(6)-([prokaryotic ubiquitin-like protein]-gamma-L-glutamyl)-[protein]-L-lysine.. Its pathway is protein degradation; proteasomal Pup-dependent pathway. It participates in protein modification; protein pupylation. In terms of biological role, catalyzes the covalent attachment of the prokaryotic ubiquitin-like protein modifier Pup to the proteasomal substrate proteins, thereby targeting them for proteasomal degradation. This tagging system is termed pupylation. The ligation reaction involves the side-chain carboxylate of the C-terminal glutamate of Pup and the side-chain amino group of a substrate lysine. This is Pup--protein ligase from Kocuria rhizophila (strain ATCC 9341 / DSM 348 / NBRC 103217 / DC2201).